The sequence spans 347 residues: Protein N-terminal asparagine amidohydrolase (347 aa).

The enzyme catalyses N-terminal L-asparaginyl-[protein] + H2O + H(+) = N-terminal L-aspartyl-[protein] + NH4(+). N-terminal asparagine deamidase that mediates deamidation of N-terminal asparagine residues to aspartate. Required for the ubiquitin-dependent turnover of intracellular proteins that initiate with Met-Asn. These proteins are acetylated on the retained initiator methionine and can subsequently be modified by the removal of N-acetyl methionine by acylaminoacid hydrolase (AAH). Conversion of the resulting N-terminal asparagine to aspartate by NTAN1 renders the protein susceptible to arginylation, polyubiquitination and degradation as specified by the N-end rule. This enzyme does not act on substrates with internal or C-terminal asparagines and does not act on glutamine residues in any position. Does not seem to be involved in immune response, unlike the N-terminal glutamine amidohydrolase NTAQ1. This chain is Protein N-terminal asparagine amidohydrolase, found in Arabidopsis thaliana (Mouse-ear cress).